A 300-amino-acid chain; its full sequence is Probable acetyltransferase Rv3034c (300 aa).

An N-terminal signal peptide occupies residues 1–25; sequence MNVLSLGSSSGVVWGRVPITAPAGA.

Belongs to the transferase hexapeptide repeat family.

Its function is as follows. May be involved in the biosynthesis of 6-O-methylglucosyl-containing lipopolysaccharides (MGLP). Regulates host peroxisome homeostasis in response to intracellular redox levels to favor mycobacterial infection in macrophage. Induces the expression of host peroxisome biogenesis and proliferation factors as well as peroxisome associated enzymes. Inhibits the induction of host pexophagy mechanism by down-regulating the expression of pexophagy associated proteins and adapter molecules in infected macrophages. However, during increased oxidative stress conditions, it induces degradation of dysfunctional and damaged peroxisomes. Regulation of peroxisome biogenesis and degradation is dependent upon host p-mTORC1 mediated signaling pathway. The protein is Probable acetyltransferase Rv3034c of Mycobacterium tuberculosis (strain ATCC 25618 / H37Rv).